Reading from the N-terminus, the 1253-residue chain is Guanine nucleotide exchange factor SDC25 (1253 aa).

The SH3 domain occupies 26 to 98; that stretch reads QPIDVVECTY…PPSFTRSILN (73 aa). The tract at residues 624–649 is disordered; it reads LNLDNAKDKKNGSQNTDIQEEEDEYE. The 133-residue stretch at 782 to 914 folds into the N-terminal Ras-GEF domain; that stretch reads GPIVRIKGGS…ELLKEVNQKF (133 aa). The Ras-GEF domain maps to 952–1199; the sequence is VDPVLFATQL…QYQLSLIIEP (248 aa). Residues 1202 to 1253 are disordered; sequence RKKVVPNSNSNNKSQEKSRDDQTDEGKTSTKKDRFPKFQLHKTKKKAPKVSK. A compositionally biased stretch (basic and acidic residues) spans 1215–1237; sequence SQEKSRDDQTDEGKTSTKKDRFP. The span at 1240–1253 shows a compositional bias: basic residues; it reads QLHKTKKKAPKVSK.

Functionally, promotes the exchange of Ras-bound GDP by GTP. The chain is Guanine nucleotide exchange factor SDC25 (SDC25) from Saccharomyces cerevisiae (Baker's yeast).